A 547-amino-acid polypeptide reads, in one-letter code: CTP synthase (547 aa).

Positions 1 to 265 are amidoligase domain; the sequence is MARYIFITGG…DQAVLDAFQI (265 aa). S13 is a binding site for CTP. S13 is a binding site for UTP. ATP contacts are provided by residues 14 to 19 and D71; that span reads SLGKGL. 2 residues coordinate Mg(2+): D71 and E139. CTP is bound by residues 146-148, 186-191, and K222; these read DIE and KTKPTQ. UTP is bound by residues 186–191 and K222; that span reads KTKPTQ. The Glutamine amidotransferase type-1 domain occupies 291–546; it reads RIAVVGKYTQ…IRAAMDNERL (256 aa). Position 352 (G352) interacts with L-glutamine. Catalysis depends on C379, which acts as the Nucleophile; for glutamine hydrolysis. L-glutamine is bound by residues 380-383, E403, and R474; that span reads LGMQ. Active-site residues include H519 and E521.

This sequence belongs to the CTP synthase family. Homotetramer.

It catalyses the reaction UTP + L-glutamine + ATP + H2O = CTP + L-glutamate + ADP + phosphate + 2 H(+). It carries out the reaction L-glutamine + H2O = L-glutamate + NH4(+). The enzyme catalyses UTP + NH4(+) + ATP = CTP + ADP + phosphate + 2 H(+). Its pathway is pyrimidine metabolism; CTP biosynthesis via de novo pathway; CTP from UDP: step 2/2. Allosterically activated by GTP, when glutamine is the substrate; GTP has no effect on the reaction when ammonia is the substrate. The allosteric effector GTP functions by stabilizing the protein conformation that binds the tetrahedral intermediate(s) formed during glutamine hydrolysis. Inhibited by the product CTP, via allosteric rather than competitive inhibition. Catalyzes the ATP-dependent amination of UTP to CTP with either L-glutamine or ammonia as the source of nitrogen. Regulates intracellular CTP levels through interactions with the four ribonucleotide triphosphates. The sequence is that of CTP synthase from Paracoccus denitrificans (strain Pd 1222).